A 311-amino-acid polypeptide reads, in one-letter code: Dermonecrotic toxin (311 aa).

The N-terminal stretch at 1-21 (MYVHLALILGCWTVVLQGAET) is a signal peptide. A propeptide spanning residues 22 to 26 (DVGER) is cleaved from the precursor. His38 is an active-site residue. Mg(2+) contacts are provided by Glu58 and Asp60. Catalysis depends on His73, which acts as the Nucleophile. The cysteines at positions 77 and 83 are disulfide-linked. Asp117 contributes to the Mg(2+) binding site.

This sequence belongs to the arthropod phospholipase D family. Class I subfamily. Mg(2+) is required as a cofactor. In terms of tissue distribution, expressed by the venom gland.

Its subcellular location is the secreted. The catalysed reaction is an N-(acyl)-sphingosylphosphocholine = an N-(acyl)-sphingosyl-1,3-cyclic phosphate + choline. The enzyme catalyses an N-(acyl)-sphingosylphosphoethanolamine = an N-(acyl)-sphingosyl-1,3-cyclic phosphate + ethanolamine. It carries out the reaction a 1-acyl-sn-glycero-3-phosphocholine = a 1-acyl-sn-glycero-2,3-cyclic phosphate + choline. It catalyses the reaction a 1-acyl-sn-glycero-3-phosphoethanolamine = a 1-acyl-sn-glycero-2,3-cyclic phosphate + ethanolamine. Its activity is regulated as follows. Catalytic activity and hemolysis are inhibited by divalent ion chelators (1,10-phenanthroline, EDTA, and EGTA). Functionally, dermonecrotic toxins cleave the phosphodiester linkage between the phosphate and headgroup of certain phospholipids (sphingolipid and lysolipid substrates), forming an alcohol (often choline) and a cyclic phosphate. This toxin acts on sphingomyelin (SM). It may also act on ceramide phosphoethanolamine (CPE), lysophosphatidylcholine (LPC) and lysophosphatidylethanolamine (LPE), but not on lysophosphatidylserine (LPS), and lysophosphatidylglycerol (LPG). It acts by transphosphatidylation, releasing exclusively cyclic phosphate products as second products. Shows complement-dependent hemolysis. Also induces dermonecrosis, vascular permeability, edema, inflammatory response, and platelet aggregation. The sequence is that of Dermonecrotic toxin from Loxosceles laeta (South American recluse spider).